A 264-amino-acid polypeptide reads, in one-letter code: tRNA1(Val) (adenine(37)-N6)-methyltransferase (264 aa).

This sequence belongs to the methyltransferase superfamily. tRNA (adenine-N(6)-)-methyltransferase family.

Its subcellular location is the cytoplasm. The catalysed reaction is adenosine(37) in tRNA1(Val) + S-adenosyl-L-methionine = N(6)-methyladenosine(37) in tRNA1(Val) + S-adenosyl-L-homocysteine + H(+). Specifically methylates the adenine in position 37 of tRNA(1)(Val) (anticodon cmo5UAC). The protein is tRNA1(Val) (adenine(37)-N6)-methyltransferase of Shewanella pealeana (strain ATCC 700345 / ANG-SQ1).